Consider the following 293-residue polypeptide: ELMO domain-containing protein 2 (293 aa).

Positions 126 to 282 (QHEELLMKLW…KFHEKIKGLL (157 aa)) constitute an ELMO domain.

In terms of tissue distribution, alveolar cells (morphologically type II cells) and alveolar macrophages (at protein level). Expressed in brain, colon, heart, kidney, liver, lung, muscle, placenta, small intestine, spleen, stomach and testis. In lung it is expressed in alveolar macrophages and alveolar walls.

In terms of biological role, acts as a GTPase-activating protein (GAP) toward guanine nucleotide exchange factors like ARL2, ARL3, ARF1 and ARF6, but not for GTPases outside the Arf family. Regulates IFN-related antiviral responses. The sequence is that of ELMO domain-containing protein 2 (ELMOD2) from Homo sapiens (Human).